The sequence spans 274 residues: Probable starch degradation products transport system permease protein AmyC (274 aa).

Transmembrane regions (helical) follow at residues 11–31 (LTFL…IILV), 73–93 (LIIT…TAYA), 103–123 (VIIY…VMIP), 139–159 (LVFM…YGAL), 184–204 (IILP…IMWI), and 238–258 (WNLG…FYFL). In terms of domain architecture, ABC transmembrane type-1 spans 69 to 259 (FSNTLIITVF…LPVVIFYFLA (191 aa)).

Belongs to the binding-protein-dependent transport system permease family. MalFG subfamily.

Its subcellular location is the cell membrane. In terms of biological role, probably part of a binding-protein-dependent transport system starch degradation products. Probably responsible for the translocation of the substrate across the membrane. In Thermoanaerobacterium thermosulfurigenes (Clostridium thermosulfurogenes), this protein is Probable starch degradation products transport system permease protein AmyC (amyC).